A 286-amino-acid chain; its full sequence is Putative sugar uptake protein lin0215 (286 aa).

A run of 8 helical transmembrane segments spans residues Met4–Ser26, Gly33–Leu55, Leu114–Ala136, Gly149–Ile167, Ala177–His194, Leu207–Ala226, Val230–Val252, and Leu264–Ala283.

The protein belongs to the GRP transporter (TC 2.A.7.5) family.

The protein localises to the cell membrane. This chain is Putative sugar uptake protein lin0215, found in Listeria innocua serovar 6a (strain ATCC BAA-680 / CLIP 11262).